Consider the following 410-residue polypeptide: Squalene synthase 1 (410 aa).

N-acetylglycine is present on Gly2. 2 helical membrane passes run 283–303 and 387–407; these read SIFR…ALCY and QPNS…FAYL.

The protein belongs to the phytoene/squalene synthase family. Mg(2+) is required as a cofactor. Mn(2+) serves as cofactor. In terms of tissue distribution, expressed in all tissues analyzed (seedlings, cotyledons, inflorescences, siliques, leaves, stems and roots). Highly expressed in roots and pollen.

Its subcellular location is the endoplasmic reticulum membrane. It catalyses the reaction 2 (2E,6E)-farnesyl diphosphate + NADPH + H(+) = squalene + 2 diphosphate + NADP(+). The enzyme catalyses 2 (2E,6E)-farnesyl diphosphate + NADH + H(+) = squalene + 2 diphosphate + NAD(+). It functions in the pathway terpene metabolism; lanosterol biosynthesis; lanosterol from farnesyl diphosphate: step 1/3. In Arabidopsis thaliana (Mouse-ear cress), this protein is Squalene synthase 1.